The primary structure comprises 468 residues: Hepatocyte nuclear factor 3-alpha (468 aa).

The segment at residues 169 to 260 (AKPPYSYISL…GNMFENGCYL (92 aa)) is a DNA-binding region (fork-head). An essential for DNA binding region spans residues 251–288 (GNMFENGCYLRRQKRFKCEKQPGAGGGSGGGGSKGGPE). The tract at residues 269-396 (EKQPGAGGGS…DPHYSFNHPF (128 aa)) is disordered. Gly residues predominate over residues 273–285 (GAGGGSGGGGSKG). Phosphoserine occurs at positions 303 and 327. Low complexity-rich tracts occupy residues 318–328 (GAPAPGPAASP) and 347–365 (SPASSSAPPISSGPGALAS).

Binds DNA as a monomer. Interacts with FOXA2. Interacts with NKX2-1. Interacts with HDAC7. Interacts with the histone H3-H4 heterodimer. Associates with nucleosomes containing histone H2A. Interacts with AR. Interacts with NR0B2. In terms of tissue distribution, restricted mainly to endoderm-derived tissues (lung, liver, stomach, and small intestine). Expressed in the prostate.

The protein localises to the nucleus. In terms of biological role, transcription factor that is involved in embryonic development, establishment of tissue-specific gene expression and regulation of gene expression in differentiated tissues. Is thought to act as a 'pioneer' factor opening the compacted chromatin for other proteins through interactions with nucleosomal core histones and thereby replacing linker histones at target enhancer and/or promoter sites. Binds DNA with the consensus sequence 5'-[AC]A[AT]T[AG]TT[GT][AG][CT]T[CT]-3'. Proposed to play a role in translating the epigenetic signatures into cell type-specific enhancer-driven transcriptional programs. Involved in the development of multiple endoderm-derived organ systems such as the liver, pancreas, lungs and prostate; FOXA1 and FOXA2 seem to have at least in part redundant roles. Plays a role in prostate morphogenesis and epithelial cell differentiation. FOXA1 and FOXA2 are essential for hepatic specification. FOXA1 and FOXA2 are required for morphogenesis and cell differentiation during formation of the lung. FOXA1 and FOXA2 are involved in bile duct formation; they positively regulate the binding of glucocorticoid receptor/NR3C1 to the IL6 promoter. FOXA1 and FOXA2 regulate multiple phases of midbrain dopaminergic neuron development; they regulate expression of NEUROG2 at the beginning of mDA neurogenesis and of NR4A2 and EN1 in immature mDA neurons. Modulates the transcriptional activity of nuclear hormone receptors. Is involved in ESR1-mediated transcription. Inhibits NKX2-1-mediated transcription from the SFTPC promoter in lung epithel independently from DNA-binding. Involved in regulation of apoptosis. Involved in cell cycle regulation. Originally described as a transcription activator for a number of liver genes such as AFP, albumin, tyrosine aminotransferase, PEPCK, etc. Interacts with the cis-acting regulatory regions of these genes. Involved in glucose homeostasis; activates the GCG promoter. In Mus musculus (Mouse), this protein is Hepatocyte nuclear factor 3-alpha (Foxa1).